We begin with the raw amino-acid sequence, 533 residues long: Large neutral amino acids transporter small subunit 2 (533 aa).

Residues 1–33 (MEKGTRQRNNTAKNHPDRGSDTSPEAEASSGGG) form a disordered region. Over 1–45 (MEKGTRQRNNTAKNHPDRGSDTSPEAEASSGGGGVALKKEIGLVS) the chain is Cytoplasmic. Residues Ser-20, Ser-23, Ser-29, and Ser-30 each carry the phosphoserine modification. The helical transmembrane segment at 46 to 66 (ACGIIVGNIIGSGIFVSPKGV) threads the bilayer. Ile-54 is a binding site for L-leucine. Residues 67–74 (LENAGSVG) are Extracellular-facing. Residues 75 to 96 (LALIVWIVTGVITAVGALCYAE) form a helical membrane-spanning segment. Residues 97–117 (LGVTIPKSGGDYSYVKDIFGG) lie on the Cytoplasmic side of the membrane. A helical transmembrane segment spans residues 118–150 (LAGFLRLWIAVLVIYPTNQAVIALTFSNYVLQP). Asn-135 is an L-tryptophan binding site. Residues 151–158 (LFPTCFPP) are Extracellular-facing. The helical transmembrane segment at 159-179 (ESGLRLLAAICLLLLTWVNCS) threads the bilayer. The Cytoplasmic segment spans residues 180–182 (SVR). A helical transmembrane segment spans residues 183-211 (WATRVQDIFTAGKLLALALIIIMGVVQIC). The Extracellular segment spans residues 212–231 (KGEFFWLEPKNAFENFQEPD). Residues 232 to 253 (IGLVALAFLQGSFAYGGWNFLN) traverse the membrane as a helical segment. Gly-247 contacts L-leucine. At 254–266 (YVTEELVDPYKNL) the chain is on the cytoplasmic side. The helical transmembrane segment at 267 to 288 (PRAIFISIPLVTFVYVFANIAY) threads the bilayer. Topologically, residues 289–313 (VTAMSPQELLASNAVAVTFGEKLLG) are extracellular. A helical membrane pass occupies residues 314 to 339 (VMAWIMPISVALSTFGGVNGSLFTSS). At 340–365 (RLFFAGAREGHLPSVLAMIHVKRCTP) the chain is on the cytoplasmic side. Residues 366–383 (IPALLFTCLSTLLMLVTS) traverse the membrane as a helical segment. At 384–387 (DMYT) the chain is on the extracellular side. Residues 388 to 409 (LINYVGFINYLFYGVTVAGQIV) traverse the membrane as a helical segment. Asn-396 lines the L-tryptophan pocket. Topologically, residues 410–424 (LRWKKPDIPRPIKIS) are cytoplasmic. 2 helical membrane-spanning segments follow: residues 425 to 447 (LLFPIIYLLFWAFLLIFSLWSEP) and 448 to 467 (VVCGIGLAIMLTGVPVYFLG). Over 468–533 (VYWQHKPKCF…VKDPDSEEQP (66 aa)) the chain is Cytoplasmic. Positions 500-533 (GDSGTEETIDDVEEQHKPIFQPTPVKDPDSEEQP) are disordered. Acidic residues predominate over residues 502 to 512 (SGTEETIDDVE). The residue at position 529 (Ser-529) is a Phosphoserine.

The protein belongs to the amino acid-polyamine-organocation (APC) superfamily. L-type amino acid transporter (LAT) (TC 2.A.3.8) family. Disulfide-linked heterodimer composed of the catalytic light chain subunit SLC7A8 and the heavy chain subunit SLC3A2. SLC3A2 acts as a chaperone for correct plasma membrane trafficking and stabilization of SLC7A8 and modulates the substrate affinity and specificity of SLC7A8. ICAM-1 associates with the heterodimer SLC3A2/SLC7A8; facilitates leucine uptake. As to expression, expression is seen in jejunum mucosa and the epithelial cells of the jejunum, ileum and colon, as well as in kidney, placenta, brain, testis and skeletal muscle. Expressed in retina, inner blood-retinal barrier of retina, retinal vascular endothelial cells. Also expressed in the intestinal epithelial cell line IEC-6 and in the retinal capillary endothelial cell line TR-iBRB2.

It localises to the cell membrane. It is found in the basolateral cell membrane. It carries out the reaction L-dopa(out) + L-phenylalanine(in) = L-dopa(in) + L-phenylalanine(out). The enzyme catalyses 3,3'-diiodo-L-thyronine(out) = 3,3'-diiodo-L-thyronine(in). The catalysed reaction is L-histidine(in) + L-phenylalanine(out) = L-histidine(out) + L-phenylalanine(in). It catalyses the reaction L-tryptophan(in) + L-phenylalanine(out) = L-tryptophan(out) + L-phenylalanine(in). It carries out the reaction L-isoleucine(in) + L-phenylalanine(out) = L-isoleucine(out) + L-phenylalanine(in). The enzyme catalyses L-valine(in) + L-phenylalanine(out) = L-valine(out) + L-phenylalanine(in). The catalysed reaction is L-leucine(in) + L-phenylalanine(out) = L-leucine(out) + L-phenylalanine(in). It catalyses the reaction L-glutamine(in) + L-phenylalanine(out) = L-glutamine(out) + L-phenylalanine(in). It carries out the reaction L-cysteine(in) + L-phenylalanine(out) = L-cysteine(out) + L-phenylalanine(in). The enzyme catalyses L-phenylalanine(out) + L-methionine(in) = L-phenylalanine(in) + L-methionine(out). The catalysed reaction is L-leucine(out) + L-methionine(in) = L-leucine(in) + L-methionine(out). It catalyses the reaction L-cysteine(out) + L-methionine(in) = L-cysteine(in) + L-methionine(out). It carries out the reaction S-methylmercury-L-cysteine(out) + L-methionine(in) = S-methylmercury-L-cysteine(in) + L-methionine(out). The enzyme catalyses S-methylmercury-L-cysteine(in) + L-leucine(out) = S-methylmercury-L-cysteine(out) + L-leucine(in). The catalysed reaction is S-methylmercury-L-cysteine(in) + L-phenylalanine(out) = S-methylmercury-L-cysteine(out) + L-phenylalanine(in). It catalyses the reaction L-phenylalanine(out) + L-serine(in) = L-phenylalanine(in) + L-serine(out). It carries out the reaction L-phenylalanine(out) + glycine(in) = L-phenylalanine(in) + glycine(out). The enzyme catalyses L-phenylalanine(out) + L-alanine(in) = L-phenylalanine(in) + L-alanine(out). The catalysed reaction is 3,3',5-triiodo-L-thyronine(out) = 3,3',5-triiodo-L-thyronine(in). With respect to regulation, leucine transport activity is inhibited by 2-amino-bicyclo-(2,2,1)-heptane-2-carboxylate (BCH), glycine, L-isomers of the neutral amino acids and histidine. Its function is as follows. Associates with SLC3A2 to form a functional heterodimeric complex that translocates small and large neutral amino acids with broad specificity and a stoichiometry of 1:1. Functions as amino acid antiporter mediating the influx of extracellular essential amino acids mainly in exchange with the efflux of highly concentrated intracellular amino acids. Has relatively symmetrical selectivities but strongly asymmetrical substrate affinities at both the intracellular and extracellular sides of the transporter. This asymmetry allows SLC7A8 to regulate intracellular amino acid pools (mM concentrations) by exchange with external amino acids (uM concentration range), equilibrating the relative concentrations of different amino acids across the plasma membrane instead of mediating their net uptake. May play an essential role in the reabsorption of neutral amino acids from the epithelial cells to the bloodstream in the kidney. Involved in the uptake of methylmercury (MeHg) when administered as the L-cysteine or D,L-homocysteine complexes, and hence plays a role in metal ion homeostasis and toxicity. Involved in the cellular activity of small molecular weight nitrosothiols, via the stereoselective transport of L-nitrosocysteine (L-CNSO) across the transmembrane. Imports the thyroid hormone diiodothyronine (T2) and to a smaller extent triiodothyronine (T3) but not rT 3 or thyroxine (T4). Mediates the uptake of L-DOPA. May participate in auditory function. This chain is Large neutral amino acids transporter small subunit 2 (Slc7a8), found in Rattus norvegicus (Rat).